Consider the following 123-residue polypeptide: MDVCTITGMTARGRLRVSRSSRWCWVQGGGMYMATRLGCIQREMCEGAVSGLWEEGEDGGTRTQMGKRAREVGLEEGVLLLWRTLDLGGVGGRKLGSEGQSLSENSEQRSLMRWGCGGSSERR.

Positions 89–123 (GVGGRKLGSEGQSLSENSEQRSLMRWGCGGSSERR) are disordered. Residues 98-109 (EGQSLSENSEQR) are compositionally biased toward polar residues.

This is an uncharacterized protein from Encephalitozoon cuniculi (strain GB-M1) (Microsporidian parasite).